Reading from the N-terminus, the 245-residue chain is MLIIPAIDLKDGACVRLRQGRMEDSTVFSDDPVSMAAKWVEGGCRRLHLVDLNGAFEGQPVNGEVVTAIAKRYPNLPIQIGGGIRSLETIEHYVKAGVSYVIIGTKAVKEPEFVAEACRAFPGKVIVGLDAKDGFVATDGWAEVSSVQVIDLAKRFEADGVSAIVYTDIAKDGMMQGCNVPFTAALAAATRIPVIASGGIHNLGDIKALLDAKAPGIIGAITGRAIYEGTLDVAEAQAFCDSYQG.

Aspartate 8 functions as the Proton acceptor in the catalytic mechanism. Aspartate 130 (proton donor) is an active-site residue.

Belongs to the HisA/HisF family.

It localises to the cytoplasm. It catalyses the reaction 1-(5-phospho-beta-D-ribosyl)-5-[(5-phospho-beta-D-ribosylamino)methylideneamino]imidazole-4-carboxamide = 5-[(5-phospho-1-deoxy-D-ribulos-1-ylimino)methylamino]-1-(5-phospho-beta-D-ribosyl)imidazole-4-carboxamide. Its pathway is amino-acid biosynthesis; L-histidine biosynthesis; L-histidine from 5-phospho-alpha-D-ribose 1-diphosphate: step 4/9. This Pseudomonas fluorescens (strain ATCC BAA-477 / NRRL B-23932 / Pf-5) protein is 1-(5-phosphoribosyl)-5-[(5-phosphoribosylamino)methylideneamino] imidazole-4-carboxamide isomerase.